We begin with the raw amino-acid sequence, 789 residues long: Zinc finger FYVE domain-containing protein 1 (789 aa).

Residues 416–788 are required for localization in the lipid droplets; that stretch reads MAHSSFFPDE…LSVMTGKGPL (373 aa). FYVE-type zinc fingers lie at residues 598 to 659 and 715 to 775; these read NSQI…EARN and DHEI…KKPA. Zn(2+) is bound by residues Cys604, Cys607, Cys620, Cys623, Cys628, Cys631, Cys651, Cys654, Cys721, Cys724, Cys737, Cys740, Cys745, Cys748, Cys767, and Cys770.

As to quaternary structure, interacts with RAB18 (in GTP-bound form). Interacts with BSCL2 in a RAB18-dependent manner. Interacts with ZW10.

It localises to the golgi apparatus. It is found in the golgi stack. The protein resides in the endoplasmic reticulum. Its subcellular location is the preautophagosomal structure. The protein localises to the lipid droplet. It localises to the mitochondrion. Plays a role in the formation of lipid droplets (LDs) which are storage organelles at the center of lipid and energy homeostasis. Regulates the morphology, size and distribution of LDs. Mediates the formation of endoplasmic reticulum-lipid droplets (ER-LD) contact sites by forming a complex with RAB18 and ZW10. Binds to phosphatidylinositol 3-phosphate (PtdIns3P) through FYVE-type zinc finger. The chain is Zinc finger FYVE domain-containing protein 1 (ZFYVE1) from Pongo abelii (Sumatran orangutan).